The following is a 209-amino-acid chain: Glycerol-3-phosphate acyltransferase (209 aa).

A run of 5 helical transmembrane segments spans residues 7-27, 85-105, 117-137, 142-162, and 166-183; these read IELAGIAGAYFLGSLSSAIIV, AIILVGFASFIGHLYPIFFGF, VMFGLSLPIGAAVAGTWLFVA, ISSLSALIATALAPLYIYLLA, and MAWVSVTAIMTLILFWRH.

The protein belongs to the PlsY family. Probably interacts with PlsX.

The protein resides in the cell inner membrane. It carries out the reaction an acyl phosphate + sn-glycerol 3-phosphate = a 1-acyl-sn-glycero-3-phosphate + phosphate. It participates in lipid metabolism; phospholipid metabolism. Its function is as follows. Catalyzes the transfer of an acyl group from acyl-phosphate (acyl-PO(4)) to glycerol-3-phosphate (G3P) to form lysophosphatidic acid (LPA). This enzyme utilizes acyl-phosphate as fatty acyl donor, but not acyl-CoA or acyl-ACP. The protein is Glycerol-3-phosphate acyltransferase of Hydrogenovibrio crunogenus (strain DSM 25203 / XCL-2) (Thiomicrospira crunogena).